The chain runs to 189 residues: Small ribosomal subunit protein uS7 (189 aa).

The protein belongs to the universal ribosomal protein uS7 family. As to quaternary structure, part of the 30S ribosomal subunit.

Its function is as follows. One of the primary rRNA binding proteins, it binds directly to 16S rRNA where it nucleates assembly of the head domain of the 30S subunit. Is located at the subunit interface close to the decoding center. In Methanosarcina mazei (strain ATCC BAA-159 / DSM 3647 / Goe1 / Go1 / JCM 11833 / OCM 88) (Methanosarcina frisia), this protein is Small ribosomal subunit protein uS7.